The primary structure comprises 187 residues: Elongation factor P (187 aa).

This sequence belongs to the elongation factor P family.

The protein localises to the cytoplasm. The protein operates within protein biosynthesis; polypeptide chain elongation. Involved in peptide bond synthesis. Stimulates efficient translation and peptide-bond synthesis on native or reconstituted 70S ribosomes in vitro. Probably functions indirectly by altering the affinity of the ribosome for aminoacyl-tRNA, thus increasing their reactivity as acceptors for peptidyl transferase. The protein is Elongation factor P of Syntrophus aciditrophicus (strain SB).